The following is a 490-amino-acid chain: Betaine aldehyde dehydrogenase (490 aa).

Isoleucine 27 and aspartate 93 together coordinate K(+). 150 to 152 (GAW) provides a ligand contact to NAD(+). Lysine 162 functions as the Charge relay system in the catalytic mechanism. 176-179 (KPSE) serves as a coordination point for NAD(+). K(+) is bound at residue valine 180. Residue 230–233 (GTTT) coordinates NAD(+). Leucine 246 is a K(+) binding site. Catalysis depends on glutamate 252, which acts as the Proton acceptor. NAD(+) is bound by residues glycine 254, cysteine 286, and glutamate 387. The Nucleophile role is filled by cysteine 286. Position 286 is a cysteine sulfenic acid (-SOH) (cysteine 286). Positions 457 and 460 each coordinate K(+). The active-site Charge relay system is glutamate 464.

This sequence belongs to the aldehyde dehydrogenase family. Dimer of dimers. K(+) serves as cofactor.

It carries out the reaction betaine aldehyde + NAD(+) + H2O = glycine betaine + NADH + 2 H(+). The protein operates within amine and polyamine biosynthesis; betaine biosynthesis via choline pathway; betaine from betaine aldehyde: step 1/1. Involved in the biosynthesis of the osmoprotectant glycine betaine. Catalyzes the irreversible oxidation of betaine aldehyde to the corresponding acid. This Pseudomonas putida (strain GB-1) protein is Betaine aldehyde dehydrogenase.